The following is a 142-amino-acid chain: Hemoglobin subunit alpha-1 (142 aa).

Position 1 is an N-acetylserine (Ser-1). The Globin domain maps to 1-142; it reads SLSDKDKAAV…VALALAERYR (142 aa). His-59 provides a ligand contact to O2. Position 88 (His-88) interacts with heme b.

Belongs to the globin family. In terms of assembly, hb1 is a heterotetramer of two alpha-2 chains and two beta chains, while Hb2 is a heterotetramer of two alpha-2 chains and two beta chains. Red blood cells.

Functionally, involved in oxygen transport from gills to the various peripheral tissues. The protein is Hemoglobin subunit alpha-1 (hba1) of Notothenia angustata (Rockcod).